The following is a 378-amino-acid chain: Atypical chemokine receptor 2 (378 aa).

The Extracellular segment spans residues 1–49 (MPTVASPLPLTTVGSENSSSIYDYDYLDDMTILVCRKDEVLSFGRVFLP). Residue Asn17 is glycosylated (N-linked (GlcNAc...) asparagine). The chain crosses the membrane as a helical span at residues 50–70 (VVYSLIFVLGLAGNLLLLVVL). Residues 71–91 (LHSAPRRRTMELYLLNLAVSN) lie on the Cytoplasmic side of the membrane. A helical transmembrane segment spans residues 92 to 112 (LLFVVTMPFWAISVAWHWVFG). The Extracellular portion of the chain corresponds to 113 to 117 (SFLCK). Cysteines 116 and 194 form a disulfide. A helical membrane pass occupies residues 118-139 (VISTLYSINFYCGIFFITCMSL). The Cytoplasmic portion of the chain corresponds to 140–161 (DKYLEIVHAQPLHRPKAQFRNL). A helical transmembrane segment spans residues 162–182 (LLIVMVWITSLAISVPEMVFV). The Extracellular segment spans residues 183–216 (QIHQTLDGVWHCYADFGGHATIWKLYLRFQLNLL). A helical membrane pass occupies residues 217 to 237 (GFLLPLLAMIFFYSRIGCVLV). Over 238–249 (RLRPPGQGRALR) the chain is Cytoplasmic. A helical membrane pass occupies residues 250-270 (MAAALVIVFFMLWFPYNLTLF). Topologically, residues 271–292 (LHSLLDLHVFGNCEISHRLDYT) are extracellular. The chain crosses the membrane as a helical span at residues 293–313 (LQVTESLAFSHCCFTPVLYAF). At 314 to 378 (CSHRFRRYLK…SLNKGEMGNT (65 aa)) the chain is on the cytoplasmic side. A C-terminal cytoplasmic tail region spans residues 326 to 378 (LSVMLRWHQAPGTPSSNHSESSRVTAQEDVVSMNDLGERQSEDSLNKGEMGNT).

It belongs to the G-protein coupled receptor 1 family. Atypical chemokine receptor subfamily. In terms of processing, phosphorylated on serine residues in the C-terminal cytoplasmic tail. Expressed on apoptotic neutrophils (at protein level).

Its subcellular location is the early endosome. The protein resides in the recycling endosome. It localises to the cell membrane. In terms of biological role, atypical chemokine receptor that controls chemokine levels and localization via high-affinity chemokine binding that is uncoupled from classic ligand-driven signal transduction cascades, resulting instead in chemokine sequestration, degradation, or transcytosis. Also known as interceptor (internalizing receptor) or chemokine-scavenging receptor or chemokine decoy receptor. Acts as a receptor for chemokines including CCL2, CCL3, CCL3L1, CCL4, CCL5, CCL7, CCL8, CCL11, CCL13, CCL17, CCL22, CCL23, CCL24, SCYA2/MCP-1, SCY3/MIP-1-alpha, SCYA5/RANTES and SCYA7/MCP-3. Upon active ligand stimulation, activates a beta-arrestin 1 (ARRB1)-dependent, G protein-independent signaling pathway that results in the phosphorylation of the actin-binding protein cofilin (CFL1) through a RAC1-PAK1-LIMK1 signaling pathway. Activation of this pathway results in up-regulation of ACKR2 from endosomal compartment to cell membrane, increasing its efficiency in chemokine uptake and degradation. By scavenging chemokines in tissues, on the surfaces of lymphatic vessels, and in placenta, plays an essential role in the resolution (termination) of the inflammatory response and in the regulation of adaptive immune responses. Plays a major role in the immune silencing of macrophages during the resolution of inflammation. Acts as a regulator of inflammatory leukocyte interactions with lymphatic endothelial cells (LECs) and is required for immature/mature dendritic cells discrimination by LECs. This chain is Atypical chemokine receptor 2 (Ackr2), found in Mus musculus (Mouse).